The following is a 348-amino-acid chain: Fe-S cluster assembly protein DRE2 (348 aa).

Residues 1–185 (MSGEKSSLLL…KKPESPRASV (185 aa)) are N-terminal SAM-like domain. Disordered regions lie at residues 128–148 (QTAP…SKSL) and 162–213 (KKAE…TASK). Positions 186–241 (VAEDLDDGDELDGMNEDDSNSDELTASKSKFFDDVAGQDSADSIDEDDLVDDAEKS) are linker. The segment covering 188–206 (EDLDDGDELDGMNEDDSNS) has biased composition (acidic residues). Residues Cys248, Cys259, Cys262, and Cys264 each coordinate [2Fe-2S] cluster. Residues 248–264 (CGKTKTRRRKACKDCTC) form a fe-S binding site A region. [4Fe-4S] cluster is bound by residues Cys311, Cys314, Cys322, and Cys325. 2 consecutive short sequence motifs (cx2C motif) follow at residues 311-314 (CGSC) and 322-325 (CSGC). Residues 311–325 (CGSCSLGDAFRCSGC) are fe-S binding site B.

Belongs to the anamorsin family. In terms of assembly, monomer. Interacts with TAH18. Interacts with MIA40. [2Fe-2S] cluster serves as cofactor. Requires [4Fe-4S] cluster as cofactor.

The protein localises to the cytoplasm. Its subcellular location is the mitochondrion intermembrane space. Component of the cytosolic iron-sulfur (Fe-S) protein assembly (CIA) machinery required for the maturation of extramitochondrial Fe-S proteins. Part of an electron transfer chain functioning in an early step of cytosolic Fe-S biogenesis, facilitating the de novo assembly of a [4Fe-4S] cluster on the scaffold complex CFD1-NBP35. Electrons are transferred to DRE2 from NADPH via the FAD- and FMN-containing protein TAH18. TAH18-DRE2 are also required for the assembly of the diferric tyrosyl radical cofactor of ribonucleotide reductase (RNR), probably by providing electrons for reduction during radical cofactor maturation in the catalytic small subunit RNR2. The sequence is that of Fe-S cluster assembly protein DRE2 from Lachancea thermotolerans (strain ATCC 56472 / CBS 6340 / NRRL Y-8284) (Yeast).